The chain runs to 198 residues: Glycerol-3-phosphate acyltransferase (198 aa).

The next 5 membrane-spanning stretches (helical) occupy residues 5–25 (LILL…LWIG), 56–76 (SIVT…PFFF), 84–104 (FWLL…FAGF), 114–134 (AGVI…VFLV), and 158–178 (LFMG…FVIW).

The protein belongs to the PlsY family. As to quaternary structure, probably interacts with PlsX.

It localises to the cell membrane. The catalysed reaction is an acyl phosphate + sn-glycerol 3-phosphate = a 1-acyl-sn-glycero-3-phosphate + phosphate. It participates in lipid metabolism; phospholipid metabolism. Catalyzes the transfer of an acyl group from acyl-phosphate (acyl-PO(4)) to glycerol-3-phosphate (G3P) to form lysophosphatidic acid (LPA). This enzyme utilizes acyl-phosphate as fatty acyl donor, but not acyl-CoA or acyl-ACP. The chain is Glycerol-3-phosphate acyltransferase from Listeria monocytogenes serovar 1/2a (strain ATCC BAA-679 / EGD-e).